The sequence spans 314 residues: tRNA pseudouridine synthase B (314 aa).

His43 contributes to the substrate binding site. Catalysis depends on Asp48, which acts as the Nucleophile. Residues Tyr76, Tyr179, and Leu200 each contribute to the substrate site.

Belongs to the pseudouridine synthase TruB family. Type 1 subfamily.

It catalyses the reaction uridine(55) in tRNA = pseudouridine(55) in tRNA. Its function is as follows. Responsible for synthesis of pseudouridine from uracil-55 in the psi GC loop of transfer RNAs. The sequence is that of tRNA pseudouridine synthase B from Pectobacterium atrosepticum (strain SCRI 1043 / ATCC BAA-672) (Erwinia carotovora subsp. atroseptica).